A 410-amino-acid polypeptide reads, in one-letter code: Peptidase T (410 aa).

A Zn(2+)-binding site is contributed by H78. The active site involves D80. Residue D140 coordinates Zn(2+). E173 serves as the catalytic Proton acceptor. Residues E174, D196, and H379 each contribute to the Zn(2+) site.

Belongs to the peptidase M20B family. It depends on Zn(2+) as a cofactor.

It is found in the cytoplasm. It carries out the reaction Release of the N-terminal residue from a tripeptide.. Functionally, cleaves the N-terminal amino acid of tripeptides. The chain is Peptidase T from Pectobacterium carotovorum subsp. carotovorum (strain PC1).